The chain runs to 236 residues: Ribonuclease 3 (236 aa).

The RNase III domain occupies 6 to 140; that stretch reads FLDFLKQNRI…FIGAVAQDQG (135 aa). Glutamate 46 is a Mg(2+) binding site. The active site involves aspartate 50. Residues aspartate 126 and glutamate 129 each contribute to the Mg(2+) site. The active site involves glutamate 129. The DRBM domain occupies 166-231; that stretch reads DYKTIFQEQA…AKNAILKLDD (66 aa).

This sequence belongs to the ribonuclease III family. In terms of assembly, homodimer. The cofactor is Mg(2+).

It is found in the cytoplasm. It catalyses the reaction Endonucleolytic cleavage to 5'-phosphomonoester.. Its function is as follows. Digests double-stranded RNA. Involved in the processing of primary rRNA transcript to yield the immediate precursors to the large and small rRNAs (23S and 16S). Processes some mRNAs, and tRNAs when they are encoded in the rRNA operon. Processes pre-crRNA and tracrRNA of type II CRISPR loci if present in the organism. The polypeptide is Ribonuclease 3 (Ureaplasma parvum serovar 3 (strain ATCC 700970)).